The sequence spans 151 residues: MGSDDQSAGDRIQKGFQINYMILRDADSGKIIWQENKDFSAPDHEHEARVPVKILDMRAVSREINFSTIESMENFRLDQKVLFKGRIMEEWFFEMGFVGANTTNTWQSTIEAAPESQMMPAKVLNGNVTIQTSFYDNETLITKSVVRLYYI.

Belongs to the PDE6D/unc-119 family. Interacts with Pde6.

Its subcellular location is the nucleus. The protein localises to the cytoplasm. This Drosophila sechellia (Fruit fly) protein is Probable cGMP 3',5'-cyclic phosphodiesterase subunit delta.